Reading from the N-terminus, the 249-residue chain is MSSVTLTTTTTTTSTPPKPTPKDEPQEQIYTPWRLFIYDIWVLGIVSTLAWGCRISTYLIPLFRSNVGKKHLDIGAGTGYYLNQARISSTTQLTIVDNETHALNVALARCKHPVTQTHGIVTDILQPSPFPETYLTNNDQKFDSVSMYYLLHCLPVPVASKCKIFTHLKKYMTEDGVVHGANVLGKGVRKDNWFARIIRRGCLNHGVFHNEEDNAYEFERALRENFWEVETWVVGSVFVFRAKRPILDA.

Positions 1-15 (MSSVTLTTTTTTTST) are enriched in low complexity. The interval 1–26 (MSSVTLTTTTTTTSTPPKPTPKDEPQ) is disordered.

This sequence belongs to the methyltransferase superfamily.

It catalyses the reaction 2-acetyl-3,4a,8,10,11,12a-hexahydroxy-1,4,4a,5,12,12a-hexahydrotetracene-1,12-dione + S-adenosyl-L-methionine = TAN-1612 + S-adenosyl-L-homocysteine + H(+). Its pathway is secondary metabolite biosynthesis. O-methyltransferase; part of the gene cluster that mediates the biosynthesis of the linear tetracyclic TAN-1612 neuropeptide Y receptor antagonist. The decaketide backbone of TAN-1612 is synthesized by the non-reducing polyketide synthase adaA via condensation of one acetyl-CoA starter unit with 9 malonyl-CoA units. The FAD-dependent monooxygenase adaC then performs hydroxylation at C2 while the polaketide chain is still attached to the NRPKS adaA. The alpha-hydroxylation step at C2 appears to be crucial for the following C18-C1 Claisen cyclization and release of the C9-hydroxyl version of TAN-1612 from the NRPKS adaA, two steps performed by the lactamase-like protein adaB. Finally, the O-methyltransferase adaD performs the C9 O-methylation to complete the biosynthesis of TAN-1612. In Aspergillus niger, this protein is O-methyltransferase adaD.